A 211-amino-acid chain; its full sequence is Pyridoxine/pyridoxamine 5'-phosphate oxidase (211 aa).

Residues 7 to 10 (RREY) and lysine 65 each bind substrate. Residues 60 to 65 (RTVLLK), 75 to 76 (YT), arginine 81, lysine 82, and glutamine 104 contribute to the FMN site. 3 residues coordinate substrate: tyrosine 122, arginine 126, and serine 130. FMN-binding positions include 139-140 (QS) and tryptophan 184. 190–192 (RLH) serves as a coordination point for substrate. Arginine 194 lines the FMN pocket.

Belongs to the pyridoxamine 5'-phosphate oxidase family. Homodimer. Requires FMN as cofactor.

The catalysed reaction is pyridoxamine 5'-phosphate + O2 + H2O = pyridoxal 5'-phosphate + H2O2 + NH4(+). It carries out the reaction pyridoxine 5'-phosphate + O2 = pyridoxal 5'-phosphate + H2O2. It functions in the pathway cofactor metabolism; pyridoxal 5'-phosphate salvage; pyridoxal 5'-phosphate from pyridoxamine 5'-phosphate: step 1/1. It participates in cofactor metabolism; pyridoxal 5'-phosphate salvage; pyridoxal 5'-phosphate from pyridoxine 5'-phosphate: step 1/1. In terms of biological role, catalyzes the oxidation of either pyridoxine 5'-phosphate (PNP) or pyridoxamine 5'-phosphate (PMP) into pyridoxal 5'-phosphate (PLP). The sequence is that of Pyridoxine/pyridoxamine 5'-phosphate oxidase from Aeromonas hydrophila subsp. hydrophila (strain ATCC 7966 / DSM 30187 / BCRC 13018 / CCUG 14551 / JCM 1027 / KCTC 2358 / NCIMB 9240 / NCTC 8049).